The primary structure comprises 318 residues: ADP-L-glycero-D-manno-heptose-6-epimerase (318 aa).

Residues 10-11, 31-32, K38, K53, 76-80, and N93 each bind NADP(+); these read FI, DN, and QGACS. The Proton acceptor role is filled by Y141. K145 contacts NADP(+). N172 is a binding site for substrate. V173 and K181 together coordinate NADP(+). Catalysis depends on K181, which acts as the Proton acceptor. Residues R183, H190, 204 to 207, R212, and Y276 contribute to the substrate site; that span reads FEGS.

This sequence belongs to the NAD(P)-dependent epimerase/dehydratase family. HldD subfamily. Homopentamer. The cofactor is NADP(+).

The catalysed reaction is ADP-D-glycero-beta-D-manno-heptose = ADP-L-glycero-beta-D-manno-heptose. Its pathway is nucleotide-sugar biosynthesis; ADP-L-glycero-beta-D-manno-heptose biosynthesis; ADP-L-glycero-beta-D-manno-heptose from D-glycero-beta-D-manno-heptose 7-phosphate: step 4/4. In terms of biological role, catalyzes the interconversion between ADP-D-glycero-beta-D-manno-heptose and ADP-L-glycero-beta-D-manno-heptose via an epimerization at carbon 6 of the heptose. In Brachyspira hyodysenteriae (strain ATCC 49526 / WA1), this protein is ADP-L-glycero-D-manno-heptose-6-epimerase.